The primary structure comprises 649 residues: tRNA-guanine(15) transglycosylase (649 aa).

The active-site Nucleophile is the D88. Substrate is bound by residues D123 and A194. 3 residues coordinate Zn(2+): C280, C282, and C285. Positions 573-648 (KYRIVIDSSV…VAVTLRGGLK (76 aa)) constitute a PUA domain.

The protein belongs to the archaeosine tRNA-ribosyltransferase family. The cofactor is Zn(2+).

It catalyses the reaction guanosine(15) in tRNA + 7-cyano-7-deazaguanine = 7-cyano-7-carbaguanosine(15) in tRNA + guanine. Its pathway is tRNA modification; archaeosine-tRNA biosynthesis. Its function is as follows. Exchanges the guanine residue with 7-cyano-7-deazaguanine (preQ0) at position 15 in the dihydrouridine loop (D-loop) of archaeal tRNAs. The sequence is that of tRNA-guanine(15) transglycosylase from Methanococcus maripaludis (strain C7 / ATCC BAA-1331).